A 343-amino-acid polypeptide reads, in one-letter code: MTLQKPFPDRPLTLAVLGSSGAVGAEILKILEERSFPIRELRLLASERSAGQVQFFKGEDLVVKKVSPEGFEDVDLVLASAGGSISRKWRKVINSAGAVIVDNSNAYRMEPDVPLVVPEVNPSQVFTHKGLIANPNCTTILLALVLAPLSAQLPIKRVVVSTYQSASGAGARAMNELKQLSQDVLNGNIPKSEILPYSLAFNLFLHNSPLQSNNYCEEEMKMINETRKILNQSELAITATCVRVPVLRAHSESINIEFAEPFPVEEARKILSNASGIKLLEDIQMNRFPMPIDVTGKDDIAVGRIRQDLSNPKALELWLCGDQIRKGAALNAIQIAELLLTRS.

NADP(+) contacts are provided by residues 20–23 (SGAV) and 48–49 (RS). Arg108 lines the phosphate pocket. Catalysis depends on Cys137, which acts as the Acyl-thioester intermediate. Gln164 lines the substrate pocket. Position 167 to 168 (167 to 168 (SG)) interacts with NADP(+). Lys221 provides a ligand contact to phosphate. Arg243 lines the substrate pocket. The Proton acceptor role is filled by His250. NADP(+) is bound at residue Gln323.

This sequence belongs to the aspartate-semialdehyde dehydrogenase family. In terms of assembly, homodimer.

It catalyses the reaction L-aspartate 4-semialdehyde + phosphate + NADP(+) = 4-phospho-L-aspartate + NADPH + H(+). It participates in amino-acid biosynthesis; L-lysine biosynthesis via DAP pathway; (S)-tetrahydrodipicolinate from L-aspartate: step 2/4. Its pathway is amino-acid biosynthesis; L-methionine biosynthesis via de novo pathway; L-homoserine from L-aspartate: step 2/3. The protein operates within amino-acid biosynthesis; L-threonine biosynthesis; L-threonine from L-aspartate: step 2/5. Its function is as follows. Catalyzes the NADPH-dependent formation of L-aspartate-semialdehyde (L-ASA) by the reductive dephosphorylation of L-aspartyl-4-phosphate. The protein is Aspartate-semialdehyde dehydrogenase of Prochlorococcus marinus (strain SARG / CCMP1375 / SS120).